Here is a 395-residue protein sequence, read N- to C-terminus: Imidazolonepropionase (395 aa).

Positions 72 and 74 each coordinate Fe(3+). Residues His72 and His74 each coordinate Zn(2+). 4-imidazolone-5-propanoate contacts are provided by Arg81, Tyr144, and His174. Tyr144 lines the N-formimidoyl-L-glutamate pocket. Position 231 (His231) interacts with Fe(3+). His231 contacts Zn(2+). A 4-imidazolone-5-propanoate-binding site is contributed by Glu234. A Fe(3+)-binding site is contributed by Asp306. Asp306 lines the Zn(2+) pocket.

Belongs to the metallo-dependent hydrolases superfamily. HutI family. The cofactor is Zn(2+). Fe(3+) serves as cofactor.

It is found in the cytoplasm. The catalysed reaction is 4-imidazolone-5-propanoate + H2O = N-formimidoyl-L-glutamate. It participates in amino-acid degradation; L-histidine degradation into L-glutamate; N-formimidoyl-L-glutamate from L-histidine: step 3/3. Catalyzes the hydrolytic cleavage of the carbon-nitrogen bond in imidazolone-5-propanoate to yield N-formimidoyl-L-glutamate. It is the third step in the universal histidine degradation pathway. This chain is Imidazolonepropionase, found in Pyrobaculum arsenaticum (strain DSM 13514 / JCM 11321 / PZ6).